A 64-amino-acid polypeptide reads, in one-letter code: Short neurotoxin 1 (64 aa).

4 cysteine pairs are disulfide-bonded: Cys3-Cys26, Cys20-Cys43, Cys45-Cys56, and Cys57-Cys62.

The protein belongs to the three-finger toxin family. Short-chain subfamily. Type I alpha-neurotoxin sub-subfamily. In terms of tissue distribution, expressed by the venom gland.

It localises to the secreted. Functionally, binds to muscle nicotinic acetylcholine receptor (nAChR) and inhibit acetylcholine from binding to the receptor, thereby impairing neuromuscular transmission. In Bungarus fasciatus (Banded krait), this protein is Short neurotoxin 1.